Consider the following 696-residue polypeptide: Glutamate-rich protein 6B (696 aa).

Residues 1 to 10 (MSAENNQLSG) are compositionally biased toward polar residues. A disordered region spans residues 1–105 (MSAENNQLSG…EYLEKAGYLE (105 aa)). 2 stretches are compositionally biased toward acidic residues: residues 32 to 44 (EDTEVELDEESLQ) and 54 to 72 (ESLEDKEYLEEEEDLEEEE). Residues 73 to 91 (YLGKEEYLKEEEYLGKEEH) are compositionally biased toward basic and acidic residues.

Belongs to the ERICH6 family.

This chain is Glutamate-rich protein 6B (ERICH6B), found in Homo sapiens (Human).